The following is a 337-amino-acid chain: Beta-ketoacyl-[acyl-carrier-protein] synthase III (337 aa).

Residues Cys119 and His260 contribute to the active site. The ACP-binding stretch occupies residues 261–265 (QANQR). Asn290 is a catalytic residue.

It belongs to the thiolase-like superfamily. FabH family. Homodimer.

It localises to the cytoplasm. The enzyme catalyses malonyl-[ACP] + acetyl-CoA + H(+) = 3-oxobutanoyl-[ACP] + CO2 + CoA. It participates in lipid metabolism; fatty acid biosynthesis. Its function is as follows. Catalyzes the condensation reaction of fatty acid synthesis by the addition to an acyl acceptor of two carbons from malonyl-ACP. Catalyzes the first condensation reaction which initiates fatty acid synthesis and may therefore play a role in governing the total rate of fatty acid production. Possesses both acetoacetyl-ACP synthase and acetyl transacylase activities. Its substrate specificity determines the biosynthesis of branched-chain and/or straight-chain of fatty acids. The protein is Beta-ketoacyl-[acyl-carrier-protein] synthase III of Synechococcus sp. (strain WH7803).